We begin with the raw amino-acid sequence, 649 residues long: Forkhead box protein O1 (649 aa).

Disordered regions lie at residues 1–62 (MAEA…ASAS) and 112–151 (VHSAPPQPPPTGPLSQPPPVPPAAAGPLAGQPRKTSSSRR). Thr24 is subject to Phosphothreonine; by PKB/AKT1 or PKB/AKT2 and SGK1. Positions 33 to 62 (NQSNSTTSSPAPSGSTAANPDATASLASAS) are enriched in low complexity. Pro residues predominate over residues 116-135 (PPQPPPTGPLSQPPPVPPAA). The fork-head DNA-binding region spans 154-248 (WGNLSYADLI…KSGKSPRRRA (95 aa)). DNA-binding stretches follow at residues 205-212 (NSIRHNLS) and 228-231 (SSWW). Phosphoserine; by STK4/MST1 is present on Ser206. 3 positions are modified to phosphoserine: Ser212, Ser228, and Ser229. The interval 228 to 339 (SSWWMLNPEG…DDLGDGDVHS (112 aa)) is disordered. 2 positions are modified to N6-acetyllysine: Lys239 and Lys242. Ser243 bears the Phosphoserine; by CDK1 mark. Omega-N-methylarginine; by PRMT1 is present on residues Arg245 and Arg247. The short motif at 245–247 (RRR) is the Nuclear localization signal element. At Ser250 the chain carries Phosphoserine; by PKB/AKT1 and SGK1. 3 positions are modified to N6-acetyllysine: Lys256, Lys259, and Lys268. Residues 258–269 (AKSRGRAAKKKA) show a composition bias toward basic residues. A sufficient for interaction with NLK region spans residues 277–557 (GPGDSPGSQF…RLTPVKTPLQ (281 aa)). Ser281 and Ser292 each carry phosphoserine. A compositionally biased stretch (polar residues) spans 303-320 (NWSTFRPRTSSNASTISG). A Phosphoserine; by PKB/AKT1 modification is found at Ser313. Ser316 carries the post-translational modification Phosphoserine; by CK1 and SGK1. Position 319 is a phosphoserine; by CK1 (Ser319). Ser323 carries the phosphoserine modification. Thr327 is modified (phosphothreonine). Positions 357–453 (SEISNPENME…GGLNQYNCAP (97 aa)) are required for interaction with RUNX2. Lys417 is modified (N6-acetyllysine). Positions 456-460 (LKELL) match the Required for interaction with SIRT1 motif.

Interacts with LRPPRC. Interacts with RUNX2; the interaction inhibits RUNX2 transcriptional activity and mediates the IGF1/insulin-dependent BGLAP expression in osteoblasts Interacts with PPP2R1A; the interaction regulates the dephosphorylation of FOXO1 at Thr-24 and Ser-250 leading to its nuclear import. Interacts with NLK. Interacts with SIRT1; the interaction results in the deacetylation of FOXO1 leading to activation of FOXO1-mediated transcription of genes involved in DNA repair and stress resistance. Binds to CDK1. Interacts with the 14-3-3 proteins, YWHAG and YWHAZ; the interactions require insulin-stimulated phosphorylation on Thr-24, promote nuclear exit and loss of transcriptional activity. Interacts with SKP2; the interaction ubiquitinates FOXO1 leading to its proteasomal degradation. The interaction requires the presence of KRIT1. Interacts (via the C-terminal half) with ATF4 (via its DNA binding domain); the interaction occurs in osteoblasts, regulates glucose homeostasis via suppression of beta-cell proliferation and subsequent decrease in insulin production. Interacts with PRMT1; the interaction methylates FOXO1, prevents PKB/AKT1 phosphorylation and retains FOXO1 in the nucleus. Interacts with EP300 and CREBBP; the interactions acetylate FOXO1. Interacts with SIRT2; the interaction is disrupted in response to oxidative stress or serum deprivation, leading to increased level of acetylated FOXO1, which promotes stress-induced autophagy by stimulating E1-like activating enzyme ATG7. Interacts (acetylated form) with ATG7; the interaction is increased in response to oxidative stress or serum deprivation and promotes the autophagic process leading to cell death. Interacts (acetylated form) with PPARG. Interacts with XBP1; this interaction is direct and leads to FOXO1 ubiquitination and degradation via the proteasome pathway. Interacts (via the Fork-head domain) with CEBPA; the interaction increases when FOXO1 is deacetylated. Interacts with WDFY2. Forms a complex with WDFY2 and AKT1. Interacts with CRY1. Interacts with PPIA/CYPA; the interaction promotes FOXO1 dephosphorylation, nuclear accumulation and transcriptional activity. Interacts with TOX4; FOXO1 is required for full induction of TOX4-dependent activity and the interaction is inhibited by insulin. Interacts (when phosphorylated on Ser-250) with STUB1/CHIP. Phosphorylation by NLK promotes nuclear export and inhibits the transcriptional activity. In response to growth factors, phosphorylation on Thr-24, Ser-250 and Ser-313 by PKB/AKT1 promotes nuclear export and inactivation of transactivational activity. Phosphorylation on Thr-24 is required for binding 14-3-3 proteins. Phosphorylation of Ser-250 decreases DNA-binding activity and promotes the phosphorylation of Thr-24 and Ser-313, permitting phosphorylation of Ser-316 and Ser-319, probably by CDK1, leading to nuclear exclusion and loss of function. Stress signals, such as response to oxygen or nitric oxide, attenuate the PKB/AKT1-mediated phosphorylation leading to nuclear retention. Phosphorylation of Ser-323 is independent of IGF1 and leads to reduced function. Dephosphorylated on Thr-24 and Ser-250 by PP2A in beta-cells under oxidative stress leading to nuclear retention. Phosphorylation of Ser-243 by CDK1 disrupts binding of 14-3-3 proteins leading to nuclear accumulation and has no effect on DNA binding nor transcriptional activity. Phosphorylation by STK4/MST1 on Ser-206, upon oxidative stress, inhibits binding to 14-3-3 proteins and nuclear export. PPIA/CYPA promotes its dephosphorylation on Ser-250. Post-translationally, ubiquitinated by SKP2. Ubiquitination leads to proteasomal degradation. Ubiquitinated by STUB1/CHIP; when Ser-250 is phosphorylated. In terms of processing, methylation inhibits AKT1-mediated phosphorylation at Ser-250 and is increased by oxidative stress. Acetylated. Acetylation at Lys-256 and Lys-268 are necessary for autophagic cell death induction. Deacetylated by SIRT2 in response to oxidative stress or serum deprivation, thereby negatively regulating FOXO1-mediated autophagic cell death. Once in the nucleus, acetylated by CREBBP/EP300. Acetylation diminishes the interaction with target DNA and attenuates the transcriptional activity. It increases the phosphorylation at Ser-250. Deacetylation by SIRT1 results in reactivation of the transcriptional activity. Oxidative stress by hydrogen peroxide treatment appears to promote deacetylation and uncoupling of insulin-induced phosphorylation. By contrast, resveratrol acts independently of acetylation. Acetylated at Lys-417, promoting its localization to the nucleus and transcription factor activity. Deacetylation at Lys-417 by SIRT6, promotes its translocation into the cytoplasm, preventing its transcription factor activity. Deacetylation and subsequent inhibition by SIRT6 has different effects depending on cell types: it inhibits gluconeogenesis in hepatocytes, promotes glucose sensing in pancreatic beta-cells and regulates lipid catabolism in brown adipocytes. Expressed in the internal elastic lamina of the carotid artery (at protein level).

Its subcellular location is the cytoplasm. The protein resides in the nucleus. Functionally, transcription factor that is the main target of insulin signaling and regulates metabolic homeostasis in response to oxidative stress. Binds to the insulin response element (IRE) with consensus sequence 5'-TT[G/A]TTTTG-3' and the related Daf-16 family binding element (DBE) with consensus sequence 5'-TT[G/A]TTTAC-3'. Activity suppressed by insulin. Main regulator of redox balance and osteoblast numbers and controls bone mass. Orchestrates the endocrine function of the skeleton in regulating glucose metabolism. Also acts as a key regulator of chondrogenic commitment of skeletal progenitor cells in response to lipid availability: when lipids levels are low, translocates to the nucleus and promotes expression of SOX9, which induces chondrogenic commitment and suppresses fatty acid oxidation. Acts synergistically with ATF4 to suppress osteocalcin/BGLAP activity, increasing glucose levels and triggering glucose intolerance and insulin insensitivity. Also suppresses the transcriptional activity of RUNX2, an upstream activator of osteocalcin/BGLAP. Acts as an inhibitor of glucose sensing in pancreatic beta cells by acting as a transcription repressor and suppressing expression of PDX1. In hepatocytes, promotes gluconeogenesis by acting together with PPARGC1A and CEBPA to activate the expression of genes such as IGFBP1, G6PC1 and PCK1. Also promotes gluconeogenesis by directly promoting expression of PPARGC1A and G6PC1. Important regulator of cell death acting downstream of CDK1, PKB/AKT1 and STK4/MST1. Promotes neural cell death. Mediates insulin action on adipose tissue. Regulates the expression of adipogenic genes such as PPARG during preadipocyte differentiation and, adipocyte size and adipose tissue-specific gene expression in response to excessive calorie intake. Regulates the transcriptional activity of GADD45A and repair of nitric oxide-damaged DNA in beta-cells. Required for the autophagic cell death induction in response to starvation or oxidative stress in a transcription-independent manner. Mediates the function of MLIP in cardiomyocytes hypertrophy and cardiac remodeling. Positive regulator of apoptosis in cardiac smooth muscle cells as a result of its transcriptional activation of pro-apoptotic genes. Regulates endothelial cell (EC) viability and apoptosis in a PPIA/CYPA-dependent manner via transcription of CCL2 and BCL2L11 which are involved in EC chemotaxis and apoptosis. This is Forkhead box protein O1 (Foxo1) from Rattus norvegicus (Rat).